Reading from the N-terminus, the 41-residue chain is NDDPPISIDLTFHLLRNMIEMARIENEREQAGLNRKYLDEV.

Val-41 carries the post-translational modification Valine amide.

It belongs to the sauvagine/corticotropin-releasing factor/urotensin I family.

The protein localises to the secreted. Its function is as follows. Urotensin is found in the teleost caudal neurosecretory system. It has a suggested role in osmoregulation and as a corticotropin-releasing factor. The chain is Urotensin-1 from Catostomus commersonii (White sucker).